Consider the following 416-residue polypeptide: Phosphoribosylamine--glycine ligase (416 aa).

One can recognise an ATP-grasp domain in the interval 107-313; it reads KDFMKKYNVK…FVDLINAAMD (207 aa). 133-194 is an ATP binding site; sequence LKKCTYPIVI…EEYLEGVEAS (62 aa). 2 residues coordinate Mg(2+): Glu-283 and Asn-285.

This sequence belongs to the GARS family. Mg(2+) is required as a cofactor. Requires Mn(2+) as cofactor.

It carries out the reaction 5-phospho-beta-D-ribosylamine + glycine + ATP = N(1)-(5-phospho-beta-D-ribosyl)glycinamide + ADP + phosphate + H(+). Its pathway is purine metabolism; IMP biosynthesis via de novo pathway; N(1)-(5-phospho-D-ribosyl)glycinamide from 5-phospho-alpha-D-ribose 1-diphosphate: step 2/2. The chain is Phosphoribosylamine--glycine ligase from Clostridium acetobutylicum (strain ATCC 824 / DSM 792 / JCM 1419 / IAM 19013 / LMG 5710 / NBRC 13948 / NRRL B-527 / VKM B-1787 / 2291 / W).